A 174-amino-acid chain; its full sequence is Shikimate kinase (174 aa).

15–20 is an ATP binding site; that stretch reads GTGKST. Residue S19 participates in Mg(2+) binding. Substrate contacts are provided by D37, R61, and G82. R120 serves as a coordination point for ATP. Residue R138 coordinates substrate.

The protein belongs to the shikimate kinase family. As to quaternary structure, monomer. Requires Mg(2+) as cofactor.

It is found in the cytoplasm. The catalysed reaction is shikimate + ATP = 3-phosphoshikimate + ADP + H(+). It participates in metabolic intermediate biosynthesis; chorismate biosynthesis; chorismate from D-erythrose 4-phosphate and phosphoenolpyruvate: step 5/7. Catalyzes the specific phosphorylation of the 3-hydroxyl group of shikimic acid using ATP as a cosubstrate. This Staphylococcus aureus (strain NCTC 8325 / PS 47) protein is Shikimate kinase.